We begin with the raw amino-acid sequence, 932 residues long: Lon protease homolog 2, peroxisomal (932 aa).

The 250-residue stretch at 11–260 (LSLVPLPKGS…RVVDILNKQN (250 aa)) folds into the Lon N-terminal domain. Residues 298 to 328 (RRGIPGASGTPPPGLGGRNNEADEKESNELD) form a disordered region. Positions 317–328 (NEADEKESNELD) are enriched in basic and acidic residues. 486–493 (GPPGTGKT) is an ATP binding site. Positions 729-916 (HGRPGVVTGL…WEAIRHIWPD (188 aa)) constitute a Lon proteolytic domain. Residues Ser-822 and Lys-865 contribute to the active site. The short motif at 930–932 (SRL) is the Microbody targeting signal element.

This sequence belongs to the peptidase S16 family.

Its subcellular location is the peroxisome matrix. It carries out the reaction Hydrolysis of proteins in presence of ATP.. Its function is as follows. ATP-dependent serine protease that mediates the selective degradation of misfolded and unassembled polypeptides in the peroxisomal matrix. Necessary for type 2 peroxisome targeting signal (PTS2)-containing protein processing and facilitates peroxisome matrix protein import. The polypeptide is Lon protease homolog 2, peroxisomal (Emericella nidulans (strain FGSC A4 / ATCC 38163 / CBS 112.46 / NRRL 194 / M139) (Aspergillus nidulans)).